The sequence spans 535 residues: T-complex protein 1 subunit beta (535 aa).

N-acetylalanine is present on Ala-2. Position 3 is a phosphoserine (Ser-3). At Lys-13 the chain carries N6-acetyllysine. An ADP-binding site is contributed by Gly-44. Gly-44 serves as a coordination point for ATP. A Phosphoserine modification is found at Ser-60. A Mg(2+)-binding site is contributed by Asp-97. The ADP site is built by Gly-98, Thr-99, Thr-100, and Ser-101. ATP contacts are provided by Gly-98, Thr-99, and Thr-100. Lys-154 is modified (N6-acetyllysine). Ser-168 and Ser-169 together coordinate ADP. Residue Lys-181 is modified to N6-acetyllysine. Lys-248 is covalently cross-linked (Glycyl lysine isopeptide (Lys-Gly) (interchain with G-Cter in SUMO2)). Ser-260 is modified (phosphoserine). Thr-261 is subject to Phosphothreonine. ADP contacts are provided by Gly-410, Glu-495, and Lys-500. ATP contacts are provided by Glu-495 and Lys-500.

This sequence belongs to the TCP-1 chaperonin family. As to quaternary structure, component of the chaperonin-containing T-complex (TRiC), a hexadecamer composed of two identical back-to-back stacked rings enclosing a protein folding chamber. Each ring is made up of eight different subunits: TCP1/CCT1, CCT2, CCT3, CCT4, CCT5, CCT6A/CCT6, CCT7, CCT8. Interacts with PACRG. Interacts with FLCN. Interacts with DLEC1. Interacts with SVEP1.

The protein localises to the cytoplasm. It catalyses the reaction ATP + H2O = ADP + phosphate + H(+). Its function is as follows. Component of the chaperonin-containing T-complex (TRiC), a molecular chaperone complex that assists the folding of actin, tubulin and other proteins upon ATP hydrolysis. The TRiC complex mediates the folding of WRAP53/TCAB1, thereby regulating telomere maintenance. As part of the TRiC complex may play a role in the assembly of BBSome, a complex involved in ciliogenesis regulating transports vesicles to the cilia. This Rattus norvegicus (Rat) protein is T-complex protein 1 subunit beta (Cct2).